The sequence spans 258 residues: Regulatory protein RecX (258 aa).

The protein belongs to the RecX family.

Its subcellular location is the cytoplasm. In terms of biological role, modulates RecA activity. The protein is Regulatory protein RecX of Streptococcus thermophilus (strain CNRZ 1066).